A 260-amino-acid polypeptide reads, in one-letter code: Phytolongin Phyl2.1 (260 aa).

In terms of domain architecture, Longin spans 12-114 (CIAKGTVILA…LDNPTQHCLQ (103 aa)). The helical; Anchor for type IV membrane protein transmembrane segment at 231–251 (WIVLMFDLCICLVLFGIWLWI) threads the bilayer.

This sequence belongs to the synaptobrevin family.

Its subcellular location is the membrane. Its function is as follows. Non-SNARE longin protein involved in membrane-trafficking machinery. In Arabidopsis thaliana (Mouse-ear cress), this protein is Phytolongin Phyl2.1.